Here is a 201-residue protein sequence, read N- to C-terminus: Putative manganese efflux pump MntP (201 aa).

Helical transmembrane passes span 3-23, 39-59, 65-85, 116-136, 141-161, and 176-196; these read LVSIILISIGLSMDAFAVSIT, IGLFFGGFQALMPLIGWSIGI, IAALDHWIALILLSIIGGKMI, LTLLAIATSIDALAIGVSFAF, IINTIIIIGSITFVICFIGVM, and ILGGIVLIFIGIKIFIEHTNI.

It belongs to the MntP (TC 9.B.29) family.

The protein resides in the cell membrane. Functionally, probably functions as a manganese efflux pump. The protein is Putative manganese efflux pump MntP of Clostridium botulinum (strain Loch Maree / Type A3).